Consider the following 76-residue polypeptide: MARFFRRRKFCRFTAEGVKEIDYKDLDTLKGYITETGKIVPSRITGTKARYQRQLATAIKRARYLALLPYTDGHDH.

Belongs to the bacterial ribosomal protein bS18 family. In terms of assembly, part of the 30S ribosomal subunit. Forms a tight heterodimer with protein bS6.

In terms of biological role, binds as a heterodimer with protein bS6 to the central domain of the 16S rRNA, where it helps stabilize the platform of the 30S subunit. The polypeptide is Small ribosomal subunit protein bS18 (Marinobacter nauticus (strain ATCC 700491 / DSM 11845 / VT8) (Marinobacter aquaeolei)).